The primary structure comprises 144 residues: Large ribosomal subunit protein uL16 (144 aa).

Residues 1–19 (MLLPKRVKYRRQHRPKTTG) show a composition bias toward basic residues. The interval 1-23 (MLLPKRVKYRRQHRPKTTGRSKG) is disordered.

Belongs to the universal ribosomal protein uL16 family. In terms of assembly, part of the 50S ribosomal subunit.

Its function is as follows. Binds 23S rRNA and is also seen to make contacts with the A and possibly P site tRNAs. In Staphylococcus aureus (strain Mu50 / ATCC 700699), this protein is Large ribosomal subunit protein uL16.